The sequence spans 141 residues: HTH-type transcriptional repressor NsrR (141 aa).

An HTH rrf2-type domain is found at 2–129; the sequence is QLTSFTDYAL…DDCTIEELLS (128 aa). Positions 28-51 form a DNA-binding region, H-T-H motif; sequence ITEVTDLFGVSRNHMVKVINRLGQ. [2Fe-2S] cluster-binding residues include cysteine 91, cysteine 96, and cysteine 102.

It depends on [2Fe-2S] cluster as a cofactor.

Its function is as follows. Nitric oxide-sensitive repressor of genes involved in protecting the cell against nitrosative stress. May require iron for activity. In Vibrio campbellii (strain ATCC BAA-1116), this protein is HTH-type transcriptional repressor NsrR.